A 295-amino-acid polypeptide reads, in one-letter code: Cytidine deaminase (295 aa).

CMP/dCMP-type deaminase domains follow at residues 48–168 (TDNQ…FGPS) and 187–295 (EDDD…YLSL). 89-91 (NME) serves as a coordination point for substrate. H102 lines the Zn(2+) pocket. E104 acts as the Proton donor in catalysis. The Zn(2+) site is built by C129 and C132.

Belongs to the cytidine and deoxycytidylate deaminase family. As to quaternary structure, homodimer. Requires Zn(2+) as cofactor.

The enzyme catalyses cytidine + H2O + H(+) = uridine + NH4(+). The catalysed reaction is 2'-deoxycytidine + H2O + H(+) = 2'-deoxyuridine + NH4(+). Functionally, this enzyme scavenges exogenous and endogenous cytidine and 2'-deoxycytidine for UMP synthesis. The chain is Cytidine deaminase from Vibrio vulnificus (strain YJ016).